The sequence spans 132 residues: S-protein homolog 19 (132 aa).

An N-terminal signal peptide occupies residues 1–26; it reads MSGSLAFHIIMSVTFMVFFFGGLCEA. Asn-87 carries an N-linked (GlcNAc...) asparagine glycan.

Belongs to the plant self-incompatibility (S1) protein family.

It localises to the secreted. The protein is S-protein homolog 19 of Arabidopsis thaliana (Mouse-ear cress).